Reading from the N-terminus, the 215-residue chain is MEATLDGTELRVLGSLVEKDLTTPEYYPLSLNALVNACNQKSNRDPVLSLDESQVTRALDTLRFKQYALVSGSGGRVAKYRHALVEKFRFSPAELAILCELMLRGPQTVGELRGRGERMHKFSDLSEVESVLADLAERTPSLVAKLPLQPGRKEPRYCQLFSGEPDLSELAAQMEARGAGADGEKIARLEQELSELREEVASLRETIAEFRKSFE.

The protein belongs to the UPF0502 family.

This chain is UPF0502 protein Gbem_0102, found in Citrifermentans bemidjiense (strain ATCC BAA-1014 / DSM 16622 / JCM 12645 / Bem) (Geobacter bemidjiensis).